A 703-amino-acid polypeptide reads, in one-letter code: Protein STRUBBELIG-RECEPTOR FAMILY 8 (703 aa).

The first 27 residues, 1-27, serve as a signal peptide directing secretion; the sequence is MAIGDRAMFTVLLLFIASISGFSVVRC. Residues 28–291 are Extracellular-facing; sequence VTDPSDVQAL…GKGLSGGVVT (264 aa). LRR repeat units lie at residues 96–120, 122–142, 143–165, 166–190, 192–212, 213–233, and 234–256; these read LKSLRKLDVSGNSIHDTLPYQLPPN, TSLNLARNNLSGNLPYSISAM, GSLSYMNVSGNSLTMSIGDIFAD, HKSLATLDLSHNNFSGDLPSSLSTV, TLSVLYVQNNQLTGSIDVLSG, LPLKTLNVANNHFNGSIPKEL, and SSIQTLIYDGNSFDNVPASPQPE. Residues Asn-120, Asn-130, Asn-149, and Asn-178 are each glycosylated (N-linked (GlcNAc...) asparagine). Asn-226 is a glycosylation site (N-linked (GlcNAc...) asparagine). The interval 247–284 is disordered; the sequence is DNVPASPQPERPGKKETPSGSKKPKIGSEEKSSDSGKG. A helical membrane pass occupies residues 292 to 312; that stretch reads GIVFGSLFVAGIIALVLYLCL. Over 313-703 the chain is Cytoplasmic; the sequence is HKKKRKVRGS…PEHEHVDISF (391 aa). The 278-residue stretch at 395–672 folds into the Protein kinase domain; the sequence is FSQENIIGEG…SEVVQQLVRL (278 aa). ATP contacts are provided by residues 401–409 and Lys-423; that span reads IGEGSLGRV.

The protein belongs to the protein kinase superfamily. Ser/Thr protein kinase family. Expressed in seedlings, roots, stems, leaves, flowers and siliques.

Its subcellular location is the membrane. The protein is Protein STRUBBELIG-RECEPTOR FAMILY 8 (SRF8) of Arabidopsis thaliana (Mouse-ear cress).